Consider the following 436-residue polypeptide: MSDRQQVTNAKGERIAIVAGLRTPFAKQATAFHGVSALDMGKMVVNELLARSELDPKLIEQLVYGQVVQMPAAPNIAREIVLGTGMNVSTDAYSVTRACATSFQSAVNVAESIMTGNIEIGIAGGADSSSVLPIGVSKKLAHALVDLNKARSFGQKLQIFRRLGIKDLLPVPPAVAEYSTGLSMGQTAEQMAKTYNISRADQDALAHRSHTLASETWASGHLRDEVMVAHVPPYKQFIDRDNNIRENSVLESYAKLRPAFDKQHGTVTAANSTPLTDGASAIILMSEGRAKALGYQPIGYIKSYAFSAIDVWQDMLMGPSYATPLALKRAGMELEDLTLIEMHEAFAAQTLANMQMFASKKFAEEKLGRNRAIGEIDMSKFNVLGGSLAYGHPFAATGTRLITQVCRELKRRGGGTGLTTACAAGGLGVAMILEVE.

Catalysis depends on cysteine 99, which acts as the Acyl-thioester intermediate. Active-site proton acceptor residues include histidine 392 and cysteine 422.

It belongs to the thiolase-like superfamily. Thiolase family. In terms of assembly, heterotetramer of two alpha chains (FadJ) and two beta chains (FadI).

The protein resides in the cytoplasm. It catalyses the reaction an acyl-CoA + acetyl-CoA = a 3-oxoacyl-CoA + CoA. The protein operates within lipid metabolism; fatty acid beta-oxidation. Functionally, catalyzes the final step of fatty acid oxidation in which acetyl-CoA is released and the CoA ester of a fatty acid two carbons shorter is formed. This is 3-ketoacyl-CoA thiolase from Shewanella baltica (strain OS185).